A 419-amino-acid chain; its full sequence is Tyrosine--tRNA ligase 1 (419 aa).

Y35 serves as a coordination point for L-tyrosine. A 'HIGH' region motif is present at residues 40 to 49; the sequence is PTAGSLHIGH. The L-tyrosine site is built by Y172 and Q176. The 'KMSKS' region signature appears at 232-236; sequence KFGKT. K235 provides a ligand contact to ATP. In terms of domain architecture, S4 RNA-binding spans 353-418; sequence QDLVELLIES…KKHFCLVKRA (66 aa).

This sequence belongs to the class-I aminoacyl-tRNA synthetase family. TyrS type 1 subfamily. As to quaternary structure, homodimer.

The protein localises to the cytoplasm. The catalysed reaction is tRNA(Tyr) + L-tyrosine + ATP = L-tyrosyl-tRNA(Tyr) + AMP + diphosphate + H(+). Functionally, catalyzes the attachment of tyrosine to tRNA(Tyr) in a two-step reaction: tyrosine is first activated by ATP to form Tyr-AMP and then transferred to the acceptor end of tRNA(Tyr). This chain is Tyrosine--tRNA ligase 1, found in Vibrio parahaemolyticus serotype O3:K6 (strain RIMD 2210633).